Reading from the N-terminus, the 276-residue chain is BES1/BZR1 homolog protein 1 (276 aa).

3 disordered regions span residues 1 to 30, 76 to 125, and 155 to 191; these read MTAS…RERR, TTYR…PTRF, and SAPV…PTRR. The required for DNA-binding stretch occupies residues 14 to 87; the sequence is RMPTWKEREN…YRKGSRPTET (74 aa). Residues 84-103 are compositionally biased toward polar residues; sequence PTETTVPCSSIQLSPQSSAF. Residues 104–122 show a composition bias toward low complexity; the sequence is QSPIPSYQASPSSSSYPSP. Phosphothreonine is present on Thr-159. Over residues 164-174 the composition is skewed to low complexity; sequence SPRRSNPRLPR. Polar residues predominate over residues 175 to 189; sequence WQSSNFPVSAPSSPT.

This sequence belongs to the BZR/LAT61 family. In terms of processing, phosphorylated. Phosphorylation increases protein degradation.

The protein is BES1/BZR1 homolog protein 1 (BEH1) of Arabidopsis thaliana (Mouse-ear cress).